The chain runs to 152 residues: Large ribosomal subunit protein uL15 (152 aa).

Residues 1–79 are disordered; the sequence is MRLNELSPPP…GRHTPAHPKV (79 aa). The segment covering 22-35 has biased composition (gly residues); that stretch reads GEGSGYGKTSGRGQ.

This sequence belongs to the universal ribosomal protein uL15 family. As to quaternary structure, part of the 50S ribosomal subunit.

In terms of biological role, binds to the 23S rRNA. The chain is Large ribosomal subunit protein uL15 from Rubrobacter xylanophilus (strain DSM 9941 / JCM 11954 / NBRC 16129 / PRD-1).